Consider the following 430-residue polypeptide: Adenylosuccinate synthetase (430 aa).

GTP contacts are provided by residues 12–18 (GDEGKGK) and 40–42 (GHT). Aspartate 13 acts as the Proton acceptor in catalysis. Residues aspartate 13 and glycine 40 each contribute to the Mg(2+) site. IMP-binding positions include 13–16 (DEGK), 38–41 (NAGH), threonine 128, arginine 142, glutamine 223, threonine 238, and arginine 302. Histidine 41 acts as the Proton donor in catalysis. 298-304 (TTTGRPR) is a binding site for substrate. GTP contacts are provided by residues arginine 304, 330–332 (SID), and 413–415 (SVG).

It belongs to the adenylosuccinate synthetase family. In terms of assembly, homodimer. Mg(2+) serves as cofactor.

It is found in the cytoplasm. It carries out the reaction IMP + L-aspartate + GTP = N(6)-(1,2-dicarboxyethyl)-AMP + GDP + phosphate + 2 H(+). It functions in the pathway purine metabolism; AMP biosynthesis via de novo pathway; AMP from IMP: step 1/2. Functionally, plays an important role in the de novo pathway of purine nucleotide biosynthesis. Catalyzes the first committed step in the biosynthesis of AMP from IMP. The polypeptide is Adenylosuccinate synthetase (Lactococcus lactis subsp. cremoris (strain MG1363)).